The primary structure comprises 283 residues: MPAQLIDGNALAKQIRSEAALRAARLTERGHRPGLAVILVGEDPASQVYVRNKVKACQDNGFHSSLDRYPADLSEAELLARIEALNQDPNIHGILVQLPLPKHIDSHKVLEAIAPEKDVDGFHVANAGALMTGAPLFRPCTPYGCMKMLESVQFPLRGARAVVVGASNIVGKPMAMLLLQAGATVTICNSKTRDIGAHTRDADVVVAAVGKRNLITADMVKPGAVVIDVGMNRDDNGKLCGDVDFAGVREVAGYITPVPGGVGPMTITMLLVNTLEAAERAAG.

NADP(+) is bound by residues 165 to 167 (GAS) and S190.

This sequence belongs to the tetrahydrofolate dehydrogenase/cyclohydrolase family. As to quaternary structure, homodimer.

It catalyses the reaction (6R)-5,10-methylene-5,6,7,8-tetrahydrofolate + NADP(+) = (6R)-5,10-methenyltetrahydrofolate + NADPH. The enzyme catalyses (6R)-5,10-methenyltetrahydrofolate + H2O = (6R)-10-formyltetrahydrofolate + H(+). Its pathway is one-carbon metabolism; tetrahydrofolate interconversion. Its function is as follows. Catalyzes the oxidation of 5,10-methylenetetrahydrofolate to 5,10-methenyltetrahydrofolate and then the hydrolysis of 5,10-methenyltetrahydrofolate to 10-formyltetrahydrofolate. The chain is Bifunctional protein FolD from Cupriavidus necator (strain ATCC 17699 / DSM 428 / KCTC 22496 / NCIMB 10442 / H16 / Stanier 337) (Ralstonia eutropha).